The primary structure comprises 176 residues: Magnesium-dependent phosphatase 1 (176 aa).

Residue Asp-11 is the Nucleophile of the active site. Asp-11 lines the Mg(2+) pocket. Positions 12 and 13 each coordinate phosphate. Asp-13 contacts Mg(2+). The active-site Proton donor is Asp-13. Trp-20 is a substrate binding site. Residues Ser-69, Arg-70, and Lys-100 each coordinate phosphate. Arg-70 is a binding site for substrate. Position 123 (Asp-123) interacts with Mg(2+).

It belongs to the HAD-like hydrolase superfamily. Mg(2+) serves as cofactor.

The catalysed reaction is O-phospho-L-tyrosyl-[protein] + H2O = L-tyrosyl-[protein] + phosphate. Inhibited by vanadate and zinc, and slightly by calcium. Functionally, magnesium-dependent phosphatase which may act as a tyrosine phosphatase. This is Magnesium-dependent phosphatase 1 (MDP1) from Homo sapiens (Human).